Consider the following 985-residue polypeptide: Probable beta-galactosidase C (985 aa).

The N-terminal stretch at 1–23 (MRILSLLFLLLLGFLAGNRVVSA) is a signal peptide. Substrate is bound by residues Y82, N127, A128, E129, and N187. E188 (proton donor) is an active-site residue. Position 251 (Y251) interacts with substrate. Residues C257 and C304 are joined by a disulfide bond. A glycan (N-linked (GlcNAc...) asparagine) is linked at N276. E287 functions as the Nucleophile in the catalytic mechanism. Substrate is bound at residue Y353. N-linked (GlcNAc...) asparagine glycosylation is found at N391, N434, N517, N602, N677, N715, N720, and N759.

The protein belongs to the glycosyl hydrolase 35 family.

The protein resides in the secreted. The enzyme catalyses Hydrolysis of terminal non-reducing beta-D-galactose residues in beta-D-galactosides.. Its function is as follows. Cleaves beta-linked terminal galactosyl residues from gangliosides, glycoproteins, and glycosaminoglycans. The polypeptide is Probable beta-galactosidase C (lacC) (Aspergillus clavatus (strain ATCC 1007 / CBS 513.65 / DSM 816 / NCTC 3887 / NRRL 1 / QM 1276 / 107)).